A 171-amino-acid chain; its full sequence is Peptidyl-prolyl cis-trans isomerase 7 (171 aa).

Residues 7–170 enclose the PPIase cyclophilin-type domain; that stretch reads FFDITIAGKP…SECLIADCGQ (164 aa).

The protein belongs to the cyclophilin-type PPIase family.

It carries out the reaction [protein]-peptidylproline (omega=180) = [protein]-peptidylproline (omega=0). In terms of biological role, PPIases accelerate the folding of proteins. It catalyzes the cis-trans isomerization of proline imidic peptide bonds in oligopeptides. The protein is Peptidyl-prolyl cis-trans isomerase 7 (cyn-7) of Caenorhabditis elegans.